Consider the following 319-residue polypeptide: Tyrosine--tRNA ligase (319 aa).

Tyr40 contributes to the L-tyrosine binding site. Residues Pro45 to His53 carry the 'HIGH' region motif. L-tyrosine-binding residues include Tyr159, Gln163, Asp166, and Gln181. A 'KMSKS' region motif is present at residues Lys216–Ser220. Ser219 provides a ligand contact to ATP.

The protein belongs to the class-I aminoacyl-tRNA synthetase family. TyrS type 3 subfamily. Homodimer.

It is found in the cytoplasm. The enzyme catalyses tRNA(Tyr) + L-tyrosine + ATP = L-tyrosyl-tRNA(Tyr) + AMP + diphosphate + H(+). In terms of biological role, catalyzes the attachment of tyrosine to tRNA(Tyr) in a two-step reaction: tyrosine is first activated by ATP to form Tyr-AMP and then transferred to the acceptor end of tRNA(Tyr). In Methanococcus maripaludis (strain DSM 14266 / JCM 13030 / NBRC 101832 / S2 / LL), this protein is Tyrosine--tRNA ligase.